Reading from the N-terminus, the 455-residue chain is P2X purinoceptor 5 (455 aa).

Over 1-30 (MGQAAWKGFVLSLFDYKTAKFVVAKSKKVG) the chain is Cytoplasmic. A helical transmembrane segment spans residues 31 to 50 (LLYRVLQLTILLYLLIWVFL). The Extracellular segment spans residues 51 to 339 (IKKSYQDIDT…KFSIIPTVIN (289 aa)). 69–71 (KVK) is a binding site for ATP. A glycan (N-linked (GlcNAc...) asparagine) is linked at N77. Cystine bridges form between C118/C169, C129/C152, and C135/C163. Residue N157 is glycosylated (N-linked (GlcNAc...) asparagine). Position 189 (T189) interacts with ATP. An N-linked (GlcNAc...) asparagine glycan is attached at N202. 2 cysteine pairs are disulfide-bonded: C220–C229 and C263–C272. ATP-binding positions include 294-296 (NFR) and K314. The chain crosses the membrane as a helical span at residues 340–362 (IGSGLALMGAGAFFCDLVLIYLI). The Cytoplasmic portion of the chain corresponds to 363-455 (RKSEFYRDKK…PSQILQTVKT (93 aa)).

This sequence belongs to the P2X receptor family. In terms of assembly, functional P2XRs are organized as homomeric and heteromeric trimers. Homotrimer. Forms heterotrimer with P2RX1. Expressed in a number of tissues, with highest levels detected in heart and kidney.

It localises to the cell membrane. It catalyses the reaction Na(+)(in) = Na(+)(out). The enzyme catalyses Ca(2+)(in) = Ca(2+)(out). The catalysed reaction is chloride(in) = chloride(out). Activated by ATP. Slowly desensitizing. Not activated by ATP agonist alpha/beta-methylene-ATP. Highly sensitive to the antagonists suramin and PPADS. ATP-gated nonselective transmembrane cation channel permeable to potassium, sodium and calcium. Unlike other P2RX receptors, the P2X5 receptor is also permeable to chloride. Acts as an important regulator of inflammatory-related bone loss and osteoclast multinucleation. This is P2X purinoceptor 5 from Mus musculus (Mouse).